A 72-amino-acid polypeptide reads, in one-letter code: Translation initiation factor IF-1 (72 aa).

An S1-like domain is found at 1 to 72; it reads MAKEETIQMQ…SRARITFRAK (72 aa).

The protein belongs to the IF-1 family. In terms of assembly, component of the 30S ribosomal translation pre-initiation complex which assembles on the 30S ribosome in the order IF-2 and IF-3, IF-1 and N-formylmethionyl-tRNA(fMet); mRNA recruitment can occur at any time during PIC assembly.

Its subcellular location is the cytoplasm. In terms of biological role, one of the essential components for the initiation of protein synthesis. Stabilizes the binding of IF-2 and IF-3 on the 30S subunit to which N-formylmethionyl-tRNA(fMet) subsequently binds. Helps modulate mRNA selection, yielding the 30S pre-initiation complex (PIC). Upon addition of the 50S ribosomal subunit IF-1, IF-2 and IF-3 are released leaving the mature 70S translation initiation complex. This chain is Translation initiation factor IF-1, found in Nitrosospira multiformis (strain ATCC 25196 / NCIMB 11849 / C 71).